The following is a 159-amino-acid chain: ATP synthase subunit b 2 (159 aa).

A helical transmembrane segment spans residues 1–21 (MDATFWALIGLIIFLAILAYL).

This sequence belongs to the ATPase B chain family. In terms of assembly, F-type ATPases have 2 components, F(1) - the catalytic core - and F(0) - the membrane proton channel. F(1) has five subunits: alpha(3), beta(3), gamma(1), delta(1), epsilon(1). F(0) has three main subunits: a(1), b(2) and c(10-14). The alpha and beta chains form an alternating ring which encloses part of the gamma chain. F(1) is attached to F(0) by a central stalk formed by the gamma and epsilon chains, while a peripheral stalk is formed by the delta and b chains.

Its subcellular location is the cell inner membrane. Functionally, f(1)F(0) ATP synthase produces ATP from ADP in the presence of a proton or sodium gradient. F-type ATPases consist of two structural domains, F(1) containing the extramembraneous catalytic core and F(0) containing the membrane proton channel, linked together by a central stalk and a peripheral stalk. During catalysis, ATP synthesis in the catalytic domain of F(1) is coupled via a rotary mechanism of the central stalk subunits to proton translocation. In terms of biological role, component of the F(0) channel, it forms part of the peripheral stalk, linking F(1) to F(0). The sequence is that of ATP synthase subunit b 2 from Brucella anthropi (strain ATCC 49188 / DSM 6882 / CCUG 24695 / JCM 21032 / LMG 3331 / NBRC 15819 / NCTC 12168 / Alc 37) (Ochrobactrum anthropi).